The primary structure comprises 81 residues: uncharacterized protein (81 aa).

To yeast YDL157C.

Its subcellular location is the mitochondrion. This is an uncharacterized protein from Schizosaccharomyces pombe (strain 972 / ATCC 24843) (Fission yeast).